Reading from the N-terminus, the 367-residue chain is MKKTLAALIVGAFAASAANAAVVYNNEGTNVELGGRLSIIAEQSNSTIKDQKQQHGALRNQSSRFHIKATHNFGDGFYAQGYLETRLVSAQSGTESDNFGHIITKYAYVTLGNKAFGEVKLGRAKTIADGITSAEDKEYGVLNNSKYIPTNGNTVGYTFKGIDGLVLGANYLLAQERYKYGGAAGGAGGAGAVAGEVYPQKISNGVQVGAKYDANNIIAGIAYGRTNYRESIHEKDLGKKQQVNGALSTLGYRFSDLGLLVSLDSGYAKTKNYKDKHEKSYFVSPGFQYELMEDTNFYGNFKYERNSVDQGKKEREQAVLFGIDHKLHKQVLTYIEGAYARTRTNDKSKAEKTEKEKSVGVGLRVYF.

The signal sequence occupies residues 1-20 (MKKTLAALIVGAFAASAANA).

The protein belongs to the Gram-negative porin family. In terms of assembly, homotrimer.

Its subcellular location is the cell outer membrane. Forms pores that allow passive diffusion of small molecules across the outer membrane. This chain is Outer membrane protein P2 (ompP2), found in Haemophilus influenzae.